A 297-amino-acid polypeptide reads, in one-letter code: ATP synthase subunit a (297 aa).

8 helical membrane passes run 38-58, 77-97, 107-127, 133-153, 174-194, 202-222, 230-250, and 252-272; these read PLIPTAHVLSIFMVLFMIAIL, GYVLVVQLLILQFENLTVDLL, LFIIIFVYILISNLMSMVGGI, SSTVTFSLGLMSFFGTFIMGV, TIPLMINPLNVIGYFAPLLSI, VLAGSIFIALLYSLFRTFFTL, VGLVFGTLAGGLVIPAFHVYF, and ILVSAIQAFVFVSLMLTYWSQ.

It belongs to the ATPase A chain family. As to quaternary structure, F-type ATPases have 2 components, CF(1) - the catalytic core - and CF(0) - the membrane proton channel. CF(1) has five subunits: alpha(3), beta(3), gamma(1), delta(1), epsilon(1). CF(0) has three main subunits: a(1), b(2) and c(9-12). The alpha and beta chains form an alternating ring which encloses part of the gamma chain. CF(1) is attached to CF(0) by a central stalk formed by the gamma and epsilon chains, while a peripheral stalk is formed by the delta and b chains.

It is found in the cell membrane. In terms of biological role, key component of the proton channel; it plays a direct role in the translocation of protons across the membrane. The sequence is that of ATP synthase subunit a from Mycoplasmoides gallisepticum (strain R(low / passage 15 / clone 2)) (Mycoplasma gallisepticum).